We begin with the raw amino-acid sequence, 340 residues long: Fructoselysine 6-phosphate deglycase (340 aa).

SIS domains are found at residues 35–169 (IVEE…RLAP) and 201–331 (LGEL…PDER).

As to quaternary structure, homododecamer.

The catalysed reaction is N(6)-(6-phospho-D-fructosyl)-L-lysine + H2O = D-glucose 6-phosphate + L-lysine. It functions in the pathway carbohydrate metabolism; fructoselysine degradation; D-glucose 6-phosphate and lysine from fructoselysine: step 2/2. With respect to regulation, strongly inhibited by ZnCl(2). In terms of biological role, catalyzes the reversible conversion of fructoselysine 6-phosphate to glucose 6-phosphate and lysine. Functions in a fructoselysine degradation pathway that allows E.coli to grow on fructoselysine or psicoselysine. The chain is Fructoselysine 6-phosphate deglycase from Escherichia coli (strain K12).